A 149-amino-acid polypeptide reads, in one-letter code: Transcriptional repressor NrdR (149 aa).

A zinc finger spans residues 3–34 (CPFCDTEETKVIDSRLVSDGYQVRRRRECGHC). The 91-residue stretch at 49–139 (PKIIKTDGTR…VYLSFDDIDQ (91 aa)) folds into the ATP-cone domain.

It belongs to the NrdR family. Zn(2+) is required as a cofactor.

Its function is as follows. Negatively regulates transcription of bacterial ribonucleotide reductase nrd genes and operons by binding to NrdR-boxes. The protein is Transcriptional repressor NrdR of Haemophilus influenzae (strain 86-028NP).